A 246-amino-acid polypeptide reads, in one-letter code: Triosephosphate isomerase (246 aa).

9-11 (NWK) is a substrate binding site. Catalysis depends on H99, which acts as the Electrophile. The active-site Proton acceptor is E168. Substrate is bound by residues G174, S207, and 228–229 (GG).

It belongs to the triosephosphate isomerase family. In terms of assembly, homodimer.

The protein resides in the cytoplasm. It catalyses the reaction D-glyceraldehyde 3-phosphate = dihydroxyacetone phosphate. It participates in carbohydrate biosynthesis; gluconeogenesis. Its pathway is carbohydrate degradation; glycolysis; D-glyceraldehyde 3-phosphate from glycerone phosphate: step 1/1. Its function is as follows. Involved in the gluconeogenesis. Catalyzes stereospecifically the conversion of dihydroxyacetone phosphate (DHAP) to D-glyceraldehyde-3-phosphate (G3P). In Prochlorococcus marinus (strain NATL2A), this protein is Triosephosphate isomerase.